Reading from the N-terminus, the 278-residue chain is Large ribosomal subunit protein uL2 (278 aa).

The disordered stretch occupies residues 201–278; the sequence is HGNINDGKAG…IMRSRHQRKK (78 aa). Over residues 210-221 the composition is skewed to basic residues; sequence GRSRWRGKRPHV.

The protein belongs to the universal ribosomal protein uL2 family. Part of the 50S ribosomal subunit. Forms a bridge to the 30S subunit in the 70S ribosome.

In terms of biological role, one of the primary rRNA binding proteins. Required for association of the 30S and 50S subunits to form the 70S ribosome, for tRNA binding and peptide bond formation. It has been suggested to have peptidyltransferase activity; this is somewhat controversial. Makes several contacts with the 16S rRNA in the 70S ribosome. The chain is Large ribosomal subunit protein uL2 from Sinorhizobium fredii (strain NBRC 101917 / NGR234).